The following is a 135-amino-acid chain: S-adenosylmethionine decarboxylase proenzyme (135 aa).

S63 serves as the catalytic Schiff-base intermediate with substrate; via pyruvic acid. Pyruvic acid (Ser); by autocatalysis is present on S63. Residue H68 is the Proton acceptor; for processing activity of the active site. C83 (proton donor; for catalytic activity) is an active-site residue.

This sequence belongs to the prokaryotic AdoMetDC family. Type 1 subfamily. In terms of assembly, heterotetramer of two alpha and two beta chains arranged as a dimer of alpha/beta heterodimers. It depends on pyruvate as a cofactor. Post-translationally, is synthesized initially as an inactive proenzyme. Formation of the active enzyme involves a self-maturation process in which the active site pyruvoyl group is generated from an internal serine residue via an autocatalytic post-translational modification. Two non-identical subunits are generated from the proenzyme in this reaction, and the pyruvate is formed at the N-terminus of the alpha chain, which is derived from the carboxyl end of the proenzyme. The post-translation cleavage follows an unusual pathway, termed non-hydrolytic serinolysis, in which the side chain hydroxyl group of the serine supplies its oxygen atom to form the C-terminus of the beta chain, while the remainder of the serine residue undergoes an oxidative deamination to produce ammonia and the pyruvoyl group blocking the N-terminus of the alpha chain.

The catalysed reaction is S-adenosyl-L-methionine + H(+) = S-adenosyl 3-(methylsulfanyl)propylamine + CO2. Its pathway is amine and polyamine biosynthesis; S-adenosylmethioninamine biosynthesis; S-adenosylmethioninamine from S-adenosyl-L-methionine: step 1/1. Its function is as follows. Catalyzes the decarboxylation of S-adenosylmethionine to S-adenosylmethioninamine (dcAdoMet), the propylamine donor required for the synthesis of the polyamines spermine and spermidine from the diamine putrescine. This Thermodesulfovibrio yellowstonii (strain ATCC 51303 / DSM 11347 / YP87) protein is S-adenosylmethionine decarboxylase proenzyme.